The primary structure comprises 559 residues: Urocanate hydratase (559 aa).

NAD(+) is bound by residues 54–55 (GG), Gln-132, 178–180 (GMG), Glu-198, Arg-203, 244–245 (NA), 265–269 (QTSAH), 275–276 (YL), and Tyr-324. Cys-412 is an active-site residue. Residue Gly-494 participates in NAD(+) binding.

This sequence belongs to the urocanase family. NAD(+) serves as cofactor.

The protein resides in the cytoplasm. The catalysed reaction is 4-imidazolone-5-propanoate = trans-urocanate + H2O. Its pathway is amino-acid degradation; L-histidine degradation into L-glutamate; N-formimidoyl-L-glutamate from L-histidine: step 2/3. In terms of biological role, catalyzes the conversion of urocanate to 4-imidazolone-5-propionate. The chain is Urocanate hydratase from Photorhabdus laumondii subsp. laumondii (strain DSM 15139 / CIP 105565 / TT01) (Photorhabdus luminescens subsp. laumondii).